The chain runs to 364 residues: tRNA-specific 2-thiouridylase MnmA 1 (364 aa).

ATP contacts are provided by residues 11 to 18 (GMSGGTDS) and F37. C96 functions as the Nucleophile in the catalytic mechanism. C96 and C193 form a disulfide bridge. Residue G120 participates in ATP binding. Positions 142-144 (KDQ) are interaction with tRNA. C193 (cysteine persulfide intermediate) is an active-site residue. The tract at residues 309–310 (RY) is interaction with tRNA.

This sequence belongs to the MnmA/TRMU family.

Its subcellular location is the cytoplasm. The enzyme catalyses S-sulfanyl-L-cysteinyl-[protein] + uridine(34) in tRNA + AH2 + ATP = 2-thiouridine(34) in tRNA + L-cysteinyl-[protein] + A + AMP + diphosphate + H(+). Catalyzes the 2-thiolation of uridine at the wobble position (U34) of tRNA, leading to the formation of s(2)U34. In Bacteroides fragilis (strain YCH46), this protein is tRNA-specific 2-thiouridylase MnmA 1.